A 70-amino-acid polypeptide reads, in one-letter code: MSTKMTGSVKWFNETKGFGFLTQDNGGNDVFVHFNSIQSEGFKTLAEGQRVSFIVEQGKKGPQASNVVAL.

The CSD domain maps to 7-67 (GSVKWFNETK…GKKGPQASNV (61 aa)).

It localises to the cytoplasm. The polypeptide is Cold shock protein CspV (cspV) (Vibrio cholerae serotype O1 (strain ATCC 39315 / El Tor Inaba N16961)).